A 144-amino-acid polypeptide reads, in one-letter code: Protein BUD31 homolog (144 aa).

The Nuclear localization signal signature appears at 2-10 (PKVRRSRKP).

The protein belongs to the BUD31 (G10) family.

The protein localises to the nucleus. The chain is Protein BUD31 homolog from Branchiostoma belcheri (Amphioxus).